The primary structure comprises 129 residues: MLFDVKAPILGFETIHKMHLQKVDEIFLRLNSAEDNSVVSFTLVNPFALRKYEFEVPTPLKILLELEGAKSVLIANIMVVQTPIELSTVNYLAPLIFNLDKQLMGQVVLDSNKYPHYHLRENILSHTHE.

This sequence belongs to the FliW family. Interacts with translational regulator CsrA and flagellin(s).

The protein resides in the cytoplasm. Acts as an anti-CsrA protein, binds CsrA and prevents it from repressing translation of its target genes, one of which is flagellin. Binds to flagellin and participates in the assembly of the flagellum. The polypeptide is Flagellar assembly factor FliW 2 (Helicobacter pylori (strain HPAG1)).